We begin with the raw amino-acid sequence, 91 residues long: Small ribosomal subunit protein uS19 (91 aa).

It belongs to the universal ribosomal protein uS19 family.

Protein S19 forms a complex with S13 that binds strongly to the 16S ribosomal RNA. The polypeptide is Small ribosomal subunit protein uS19 (Pseudomonas fluorescens (strain SBW25)).